The chain runs to 256 residues: Ubiquinone/menaquinone biosynthesis C-methyltransferase UbiE (256 aa).

Over residues 1 to 12 (MNDQRKGEHAEP) the composition is skewed to basic and acidic residues. Residues 1 to 21 (MNDQRKGEHAEPTTHFGYQDV) are disordered. S-adenosyl-L-methionine-binding positions include Thr79, Asp100, and 128-129 (DA).

Belongs to the class I-like SAM-binding methyltransferase superfamily. MenG/UbiE family.

The enzyme catalyses a 2-demethylmenaquinol + S-adenosyl-L-methionine = a menaquinol + S-adenosyl-L-homocysteine + H(+). It carries out the reaction a 2-methoxy-6-(all-trans-polyprenyl)benzene-1,4-diol + S-adenosyl-L-methionine = a 5-methoxy-2-methyl-3-(all-trans-polyprenyl)benzene-1,4-diol + S-adenosyl-L-homocysteine + H(+). The protein operates within quinol/quinone metabolism; menaquinone biosynthesis; menaquinol from 1,4-dihydroxy-2-naphthoate: step 2/2. Its pathway is cofactor biosynthesis; ubiquinone biosynthesis. Functionally, methyltransferase required for the conversion of demethylmenaquinol (DMKH2) to menaquinol (MKH2) and the conversion of 2-polyprenyl-6-methoxy-1,4-benzoquinol (DDMQH2) to 2-polyprenyl-3-methyl-6-methoxy-1,4-benzoquinol (DMQH2). This Pseudomonas putida (strain W619) protein is Ubiquinone/menaquinone biosynthesis C-methyltransferase UbiE.